A 128-amino-acid chain; its full sequence is UPF0325 protein KPN78578_01770 (128 aa).

This sequence belongs to the UPF0325 family.

In Klebsiella pneumoniae subsp. pneumoniae (strain ATCC 700721 / MGH 78578), this protein is UPF0325 protein KPN78578_01770.